The following is a 282-amino-acid chain: Stage 0 sporulation protein J (282 aa).

Positions 139–158 (EQLAKRLGKSRPHIANHLRL) form a DNA-binding region, H-T-H motif.

Belongs to the ParB family.

The protein localises to the cytoplasm. Its subcellular location is the nucleoid. Its function is as follows. Required for the initiation of sporulation and for normal chromosome segregation. Antagonizes sporulation inhibition by Soj. It probably interacts with a specific DNA site and other proteins involved in partitioning and cell division, and antagonizes Soj in response to cell cycle events related to chromosome partitioning. The protein is Stage 0 sporulation protein J of Bacillus subtilis (strain 168).